We begin with the raw amino-acid sequence, 508 residues long: Cytochrome P450 monooxygenase dmxR5 (508 aa).

The helical transmembrane segment at 24-44 (LTLGLGAILVVLMSFLAFLSY) threads the bilayer. Asn-387 and Asn-405 each carry an N-linked (GlcNAc...) asparagine glycan. Cys-451 provides a ligand contact to heme. N-linked (GlcNAc...) asparagine glycosylation occurs at Asn-462. Residues 481–508 (EHKKSTQESGHGVPLPSKLSKFSPREEN) form a disordered region.

The protein belongs to the cytochrome P450 family. Heme serves as cofactor.

Its subcellular location is the membrane. The protein operates within secondary metabolite biosynthesis. Functionally, cytochrome P450 monooxygenase; part of the gene cluster that mediates the biosynthesis of the dimeric xanthones cryptosporioptides. The pathway begins with the synthesis of atrochrysone thioester by the polyketide synthase dmx-nrPKS. The atrochrysone carboxyl ACP thioesterase dmxR1 then breaks the thioester bond and releases the atrochrysone carboxylic acid from dmx-nrPKS. Atrochrysone carboxylic acid is decarboxylated by the decarboxylase dmxR15, and oxidized by the anthrone oxygenase dmxR16 to yield emodin. Emodin is then reduced to emodin hydroquinone by the oxidoreductase dmxR7. A-ring reduction by the short chain dehydrogenase dmxR18, dehydration by the scytalone dehydratase-like protein dmxR17 and probable spontaneous re-oxidation, results in overall deoxygenation to chrysophanol. Baeyer-Villiger oxidation by the Baeyer-Villiger monooxygenase (BVMO) dmxR6 then yields monodictylactone in equilibrium with monodictyphenone. In the case of the cryptosporioptides biosynthesis, monodictylactone is reduced at C-12 to an alcohol (by the short chain dehydrogenases dmxR12 or dmxR8) and hydroxylated at C-5 by dmxR9, yielding the electron-rich aromatic which could eliminate H(2)O to form the ortho-quinonemethide, followed by tautomerisation to paraquinone and complete the formal reduction to produce the 10-methylgroup. Conjugate addition of C-4a-OH to the resulting paraquinone by the monooxygenase dmxR10 then gives cyclohexadienone, which is then reduced at C-5 by the short chain dehydrogenase dmxR3 to give the dihydroxanthone. The 6,7-epoxide in the cryptosporioptides could be introduced by the cytochrome P450 monooxygenase dmxL3. The highly reducing PKS dmxL2 manufactures butyrate, which is further carboxylated by dmxL1 to form ethylmalonate. It is not yet clear whether the carboxylation occurs while the butyrate is attached to the ACP of dmxL2, but this unusual fungal metabolite could then be esterified to O-5 by the O-acetyltransferase dmxR13. Finally, dimerization performed by dmxR5 gives the observed dimers cryptosporioptides A, B and C as the final products of the pathway. This chain is Cytochrome P450 monooxygenase dmxR5, found in Cryptosporiopsis sp. (strain 8999).